A 141-amino-acid chain; its full sequence is Nucleoside diphosphate kinase (141 aa).

6 residues coordinate ATP: Lys11, Phe59, Arg87, Thr93, Arg104, and Asn114. Residue His117 is the Pros-phosphohistidine intermediate of the active site.

This sequence belongs to the NDK family. As to quaternary structure, homotetramer. Mg(2+) is required as a cofactor.

Its subcellular location is the cytoplasm. The enzyme catalyses a 2'-deoxyribonucleoside 5'-diphosphate + ATP = a 2'-deoxyribonucleoside 5'-triphosphate + ADP. The catalysed reaction is a ribonucleoside 5'-diphosphate + ATP = a ribonucleoside 5'-triphosphate + ADP. Functionally, major role in the synthesis of nucleoside triphosphates other than ATP. The ATP gamma phosphate is transferred to the NDP beta phosphate via a ping-pong mechanism, using a phosphorylated active-site intermediate. This Pseudomonas syringae pv. tomato (strain ATCC BAA-871 / DC3000) protein is Nucleoside diphosphate kinase.